The primary structure comprises 115 residues: NAD(P)H-quinone oxidoreductase subunit M (115 aa).

This sequence belongs to the complex I NdhM subunit family. In terms of assembly, NDH-1 can be composed of about 15 different subunits; different subcomplexes with different compositions have been identified which probably have different functions.

It is found in the cellular thylakoid membrane. The catalysed reaction is a plastoquinone + NADH + (n+1) H(+)(in) = a plastoquinol + NAD(+) + n H(+)(out). The enzyme catalyses a plastoquinone + NADPH + (n+1) H(+)(in) = a plastoquinol + NADP(+) + n H(+)(out). Functionally, NDH-1 shuttles electrons from an unknown electron donor, via FMN and iron-sulfur (Fe-S) centers, to quinones in the respiratory and/or the photosynthetic chain. The immediate electron acceptor for the enzyme in this species is believed to be plastoquinone. Couples the redox reaction to proton translocation, and thus conserves the redox energy in a proton gradient. Cyanobacterial NDH-1 also plays a role in inorganic carbon-concentration. The polypeptide is NAD(P)H-quinone oxidoreductase subunit M (Prochlorococcus marinus (strain SARG / CCMP1375 / SS120)).